The sequence spans 357 residues: Membrane-bound lytic murein transglycosylase C (357 aa).

The signal sequence occupies residues 1–15 (MKKYLLLALLPFLYA). Cys-16 is lipidated: N-palmitoyl cysteine. The S-diacylglycerol cysteine moiety is linked to residue Cys-16.

The protein belongs to the transglycosylase Slt family.

The protein resides in the cell outer membrane. The catalysed reaction is Exolytic cleavage of the (1-&gt;4)-beta-glycosidic linkage between N-acetylmuramic acid (MurNAc) and N-acetylglucosamine (GlcNAc) residues in peptidoglycan, from either the reducing or the non-reducing ends of the peptidoglycan chains, with concomitant formation of a 1,6-anhydrobond in the MurNAc residue.. In terms of biological role, murein-degrading enzyme. May play a role in recycling of muropeptides during cell elongation and/or cell division. This chain is Membrane-bound lytic murein transglycosylase C, found in Haemophilus influenzae (strain PittEE).